A 200-amino-acid chain; its full sequence is MDVTTDAGAPWLVAGLGNPGPEYASNRHNVGFMVADLLAERIGARFKRHGKAQAQVVEGRIGPPGPANRRVILAKPMSFMNVSGGPVTALRDFYKVPVGNIVAVHDELDIDYGVLRLKLGGGDNGHNGLKSITKSLGADYHRVRFGIGRPPGRMPVADFVLRDFSSTERKELDYFVDRAADAVEALVIEGLERAQSAYNS.

Y23 provides a ligand contact to tRNA. H28 acts as the Proton acceptor in catalysis. TRNA contacts are provided by F79, N81, and N127.

It belongs to the PTH family. In terms of assembly, monomer.

Its subcellular location is the cytoplasm. The catalysed reaction is an N-acyl-L-alpha-aminoacyl-tRNA + H2O = an N-acyl-L-amino acid + a tRNA + H(+). Hydrolyzes ribosome-free peptidyl-tRNAs (with 1 or more amino acids incorporated), which drop off the ribosome during protein synthesis, or as a result of ribosome stalling. Functionally, catalyzes the release of premature peptidyl moieties from peptidyl-tRNA molecules trapped in stalled 50S ribosomal subunits, and thus maintains levels of free tRNAs and 50S ribosomes. This Streptomyces coelicolor (strain ATCC BAA-471 / A3(2) / M145) protein is Peptidyl-tRNA hydrolase.